The sequence spans 517 residues: L-amino-acid oxidase (517 aa).

Residues 1–18 (MNVFFMFSLLFLAALGSC) form the signal peptide. C29 and C192 are disulfide-bonded. FAD-binding positions include 62–63 (MA), 82–83 (EA), R90, and 106–109 (GPMR). Position 109 (R109) interacts with substrate. The N-linked (GlcNAc...) asparagine glycan is linked to N191. An FAD-binding site is contributed by V280. An intrachain disulfide couples C350 to C431. Y391 provides a ligand contact to substrate. FAD contacts are provided by residues E476 and 483–488 (GWLDST). Substrate is bound at residue 483–484 (GW).

Belongs to the flavin monoamine oxidase family. FIG1 subfamily. In terms of assembly, homodimer; non-covalently linked. It depends on FAD as a cofactor. N-glycosylated. Expressed by the venom gland.

It localises to the secreted. It catalyses the reaction an L-alpha-amino acid + O2 + H2O = a 2-oxocarboxylate + H2O2 + NH4(+). Functionally, catalyzes an oxidative deamination of predominantly hydrophobic and aromatic L-amino acids, thus producing hydrogen peroxide that may contribute to the diverse toxic effects of this enzyme. Exhibits diverse biological activities, such as hemorrhage, hemolysis, edema, apoptosis of vascular endothelial cells or tumor cell lines, antiparasitic activities, as well as regulation of platelet aggregation. Effects of snake L-amino oxidases on platelets are controversial, since they either induce aggregation or inhibit agonist-induced aggregation. These different effects are probably due to different experimental conditions. This protein has antibacterial activities. This Pseudechis australis (Mulga snake) protein is L-amino-acid oxidase.